Reading from the N-terminus, the 750-residue chain is uncharacterized protein (750 aa).

Residues N61, N84, N115, N154, N176, N197, N207, N228, N241, N267, N293, N299, N312, N335, N351, N373, N389, and N519 are each glycosylated (N-linked (GlcNAc...) asparagine). Phosphoserine occurs at positions 675 and 678. K697 is covalently cross-linked (Glycyl lysine isopeptide (Lys-Gly) (interchain with G-Cter in ubiquitin)). Polar residues-rich tracts occupy residues 703 to 726 (EITAIDNSSSANNTDVTGSTSNRT) and 736 to 750 (KDSNGPVNNNAHLVA). Residues 703-750 (EITAIDNSSSANNTDVTGSTSNRTELSHPDVTPKDSNGPVNNNAHLVA) are disordered. 3 N-linked (GlcNAc...) asparagine glycosylation sites follow: N709, N714, and N724.

Post-translationally, N-glycosylated.

It localises to the mitochondrion. This is an uncharacterized protein from Saccharomyces cerevisiae (strain ATCC 204508 / S288c) (Baker's yeast).